The chain runs to 486 residues: Glycogen synthase (486 aa).

Lysine 15 provides a ligand contact to ADP-alpha-D-glucose.

This sequence belongs to the glycosyltransferase 1 family. Bacterial/plant glycogen synthase subfamily.

It catalyses the reaction [(1-&gt;4)-alpha-D-glucosyl](n) + ADP-alpha-D-glucose = [(1-&gt;4)-alpha-D-glucosyl](n+1) + ADP + H(+). Its pathway is glycan biosynthesis; glycogen biosynthesis. Its function is as follows. Synthesizes alpha-1,4-glucan chains using ADP-glucose. The polypeptide is Glycogen synthase (Thermotoga petrophila (strain ATCC BAA-488 / DSM 13995 / JCM 10881 / RKU-1)).